Here is a 157-residue protein sequence, read N- to C-terminus: Beta-defensin 125 (157 aa).

The N-terminal stretch at 1–20 is a signal peptide; it reads MNILMLTFIICGLLTQVTKG. 3 cysteine pairs are disulfide-bonded: cysteine 27–cysteine 55, cysteine 35–cysteine 49, and cysteine 39–cysteine 56. Residues 109–157 form a disordered region; that stretch reads GETMTPETNTPETTMPPPETTTPETTMPPSETATSETMPPPSQRALTHN. Composition is skewed to low complexity over residues 110–121 and 129–145; these read ETMTPETNTPET and TTPE…TSET.

Belongs to the beta-defensin family.

It localises to the secreted. Its function is as follows. Has antibacterial activity. The chain is Beta-defensin 125 (DEFB125) from Pan troglodytes (Chimpanzee).